The following is a 421-amino-acid chain: Dihydroorotase (421 aa).

Zn(2+)-binding residues include histidine 60 and histidine 62. Substrate-binding positions include 62-64 (HFR) and asparagine 94. Zn(2+)-binding residues include aspartate 151, histidine 178, and histidine 231. Asparagine 277 is a substrate binding site. A Zn(2+)-binding site is contributed by aspartate 304. Residue aspartate 304 is part of the active site. Histidine 308 serves as a coordination point for substrate.

The protein belongs to the metallo-dependent hydrolases superfamily. DHOase family. Class I DHOase subfamily. The cofactor is Zn(2+).

It carries out the reaction (S)-dihydroorotate + H2O = N-carbamoyl-L-aspartate + H(+). The protein operates within pyrimidine metabolism; UMP biosynthesis via de novo pathway; (S)-dihydroorotate from bicarbonate: step 3/3. Catalyzes the reversible cyclization of carbamoyl aspartate to dihydroorotate. In Clostridioides difficile (strain 630) (Peptoclostridium difficile), this protein is Dihydroorotase.